Consider the following 80-residue polypeptide: MSAVVVDAVEHLVRGIVDNPDDVRVDLITSRRGRTVEVHVHPDDLGKVIGRGGRTATALRTLVAGIGGRGIRVDVVDTDQ.

The region spanning 33–80 (GRTVEVHVHPDDLGKVIGRGGRTATALRTLVAGIGGRGIRVDVVDTDQ) is the KH domain.

This sequence belongs to the KhpA RNA-binding protein family.

It is found in the cytoplasm. A probable RNA-binding protein. The sequence is that of RNA-binding protein KhpA from Mycobacterium bovis (strain ATCC BAA-935 / AF2122/97).